We begin with the raw amino-acid sequence, 157 residues long: Ribosome maturation factor RimP (157 aa).

The protein belongs to the RimP family.

The protein localises to the cytoplasm. Its function is as follows. Required for maturation of 30S ribosomal subunits. The polypeptide is Ribosome maturation factor RimP (Ligilactobacillus salivarius (strain UCC118) (Lactobacillus salivarius)).